The sequence spans 334 residues: MTPLDAKRPLQLNHQGQLRHFLSLDGLPRELLTEILDTADSFLEVGARAVKKVPLLRGKTVCNVFFENSTRTRTTFELAAQRLSADVITLNVSTSSTSKGETLFDTLRNLEAMAADMFVVRHADSGAAHFIAEHVCPDVAIINGGDGRHAHPTQGMLDMLTIRRHKGGFENLSVAIVGDILHSRVARSNMIALKALGCPDIRVIGPKTLLPVGVEQYGVKVYTDLNEGLKDVDVVIMLRLQRERMTGGLLPSEGEFYRLFGLTTARLAGAKPDAIVMHPGPINRGVEIESAVADGAHSVILNQVTYGIAIRMAVLSMAMSGQNAQRQFEQENAQ.

Carbamoyl phosphate contacts are provided by Arg71 and Thr72. Residue Lys99 participates in L-aspartate binding. Arg121, His151, and Gln154 together coordinate carbamoyl phosphate. Residues Arg184 and Arg239 each coordinate L-aspartate. Carbamoyl phosphate is bound by residues Gly280 and Pro281.

This sequence belongs to the aspartate/ornithine carbamoyltransferase superfamily. ATCase family. Heterododecamer (2C3:3R2) of six catalytic PyrB chains organized as two trimers (C3), and six regulatory PyrI chains organized as three dimers (R2).

The enzyme catalyses carbamoyl phosphate + L-aspartate = N-carbamoyl-L-aspartate + phosphate + H(+). It functions in the pathway pyrimidine metabolism; UMP biosynthesis via de novo pathway; (S)-dihydroorotate from bicarbonate: step 2/3. Functionally, catalyzes the condensation of carbamoyl phosphate and aspartate to form carbamoyl aspartate and inorganic phosphate, the committed step in the de novo pyrimidine nucleotide biosynthesis pathway. This chain is Aspartate carbamoyltransferase catalytic subunit, found in Pseudomonas syringae pv. tomato (strain ATCC BAA-871 / DC3000).